Reading from the N-terminus, the 90-residue chain is MANSKQAKKRIIQAERNRQHNVARRSMMRTFLKKAAYAIEKGDVEAAKENFAKVVPILDKYASKGLIHKNKAARHKSRLSAKIKALSTAA.

It belongs to the bacterial ribosomal protein bS20 family.

Its function is as follows. Binds directly to 16S ribosomal RNA. The polypeptide is Small ribosomal subunit protein bS20 (Francisella philomiragia subsp. philomiragia (strain ATCC 25017 / CCUG 19701 / FSC 153 / O#319-036)).